Here is a 98-residue protein sequence, read N- to C-terminus: Gas vesicle protein A (98 aa).

The protein belongs to the gas vesicle GvpA family. As to quaternary structure, the gas vesicle shell is 2 nm thick and consists of a single layer of this protein. It forms helical ribs nearly perpendicular to the long axis of the vesicle.

It is found in the gas vesicle shell. Its function is as follows. Gas vesicles are hollow, gas filled proteinaceous nanostructures found in some microorganisms. During planktonic growth they allow positioning of the organism at a favorable depth for light or nutrient acquisition. GvpA forms the protein shell. The sequence is that of Gas vesicle protein A from Koribacter versatilis (strain Ellin345).